Here is a 226-residue protein sequence, read N- to C-terminus: 2-C-methyl-D-erythritol 4-phosphate cytidylyltransferase (226 aa).

The protein belongs to the IspD/TarI cytidylyltransferase family. IspD subfamily.

It carries out the reaction 2-C-methyl-D-erythritol 4-phosphate + CTP + H(+) = 4-CDP-2-C-methyl-D-erythritol + diphosphate. It participates in isoprenoid biosynthesis; isopentenyl diphosphate biosynthesis via DXP pathway; isopentenyl diphosphate from 1-deoxy-D-xylulose 5-phosphate: step 2/6. In terms of biological role, catalyzes the formation of 4-diphosphocytidyl-2-C-methyl-D-erythritol from CTP and 2-C-methyl-D-erythritol 4-phosphate (MEP). The polypeptide is 2-C-methyl-D-erythritol 4-phosphate cytidylyltransferase (Bacillus cereus (strain ATCC 14579 / DSM 31 / CCUG 7414 / JCM 2152 / NBRC 15305 / NCIMB 9373 / NCTC 2599 / NRRL B-3711)).